We begin with the raw amino-acid sequence, 213 residues long: Cytidylate kinase (213 aa).

Residue 9-17 (GPAASGKGT) coordinates ATP.

Belongs to the cytidylate kinase family. Type 1 subfamily.

The protein resides in the cytoplasm. It catalyses the reaction CMP + ATP = CDP + ADP. The catalysed reaction is dCMP + ATP = dCDP + ADP. In Caulobacter vibrioides (strain ATCC 19089 / CIP 103742 / CB 15) (Caulobacter crescentus), this protein is Cytidylate kinase.